The primary structure comprises 413 residues: Hemolin (413 aa).

Residues 1–18 form the signal peptide; sequence MVSKSIVALAACVAMCVA. 4 Ig-like C2-type domains span residues 25–112, 121–215, 233–322, and 327–411; these read PVLK…HIIS, PTTF…LVGY, PMYV…VKLT, and PRFT…TLVI. 4 disulfide bridges follow: Cys-46–Cys-97, Cys-141–Cys-199, Cys-252–Cys-305, and Cys-349–Cys-395. A glycan (N-linked (GlcNAc...) asparagine) is linked at Asn-283.

It belongs to the hemolin family. As to expression, hemolymph.

The protein localises to the secreted. Functionally, insect-immune protein with antimicrobial activity. Forms a protein complex at the bacterial surface. Can inhibit hemocyte aggregation. The chain is Hemolin from Manduca sexta (Tobacco hawkmoth).